The following is a 1081-amino-acid chain: Histone demethylase-like protein A (1081 aa).

A disordered region spans residues 37–173 (QHLQHPSLPN…LSGNTDYARY (137 aa)). Low complexity predominate over residues 66–81 (SPSCNESNESNGETSS). Residues 119–132 (DTSNILSGSATSVS) show a composition bias toward polar residues. Positions 141–161 (NSTPPSTVNNVPSSSSITSDS) are enriched in low complexity. In terms of domain architecture, SWIRM spans 192 to 287 (CVTAAYACRL…FGCVEIPPAL (96 aa)). The interval 902–940 (ATAQKKKEPPCSNGFSAPVSTSAHPTDASAPARSNNSFS) is disordered. The span at 914–925 (NGFSAPVSTSAH) shows a compositional bias: polar residues. The HMG box DNA-binding region spans 969–1049 (ARTGLNPFLL…TNTEIWDRWK (81 aa)).

This sequence belongs to the flavin monoamine oxidase family.

Its subcellular location is the nucleus. Functionally, H3K4 demethylase-like protein. Might not act as a H3K4 demethylase or is not the major H3K4 demethylase since its deletion does not affect whole genome H3K4 methylation. In Aspergillus fumigatus (strain ATCC MYA-4609 / CBS 101355 / FGSC A1100 / Af293) (Neosartorya fumigata), this protein is Histone demethylase-like protein A.